Consider the following 216-residue polypeptide: Uracil phosphoribosyltransferase (216 aa).

Residues R85, R110, and 135 to 143 (DPMVATGYS) each bind 5-phospho-alpha-D-ribose 1-diphosphate. Residues I200 and 205 to 207 (GDA) contribute to the uracil site. D206 serves as a coordination point for 5-phospho-alpha-D-ribose 1-diphosphate.

It belongs to the UPRTase family. Mg(2+) serves as cofactor.

It carries out the reaction UMP + diphosphate = 5-phospho-alpha-D-ribose 1-diphosphate + uracil. It functions in the pathway pyrimidine metabolism; UMP biosynthesis via salvage pathway; UMP from uracil: step 1/1. With respect to regulation, allosterically activated by GTP. Its function is as follows. Catalyzes the conversion of uracil and 5-phospho-alpha-D-ribose 1-diphosphate (PRPP) to UMP and diphosphate. This Burkholderia multivorans (strain ATCC 17616 / 249) protein is Uracil phosphoribosyltransferase.